The chain runs to 20 residues: Hemocyanin subunit 6 (20 aa).

It belongs to the tyrosinase family. Hemocyanin subfamily. Hemolymph.

Its subcellular location is the secreted. The protein localises to the extracellular space. Its function is as follows. Hemocyanins are copper-containing oxygen carriers occurring freely dissolved in the hemolymph of many mollusks and arthropods. This Homarus americanus (American lobster) protein is Hemocyanin subunit 6.